The following is a 430-amino-acid chain: Gamma-glutamyl phosphate reductase (430 aa).

It belongs to the gamma-glutamyl phosphate reductase family.

Its subcellular location is the cytoplasm. It catalyses the reaction L-glutamate 5-semialdehyde + phosphate + NADP(+) = L-glutamyl 5-phosphate + NADPH + H(+). The protein operates within amino-acid biosynthesis; L-proline biosynthesis; L-glutamate 5-semialdehyde from L-glutamate: step 2/2. Functionally, catalyzes the NADPH-dependent reduction of L-glutamate 5-phosphate into L-glutamate 5-semialdehyde and phosphate. The product spontaneously undergoes cyclization to form 1-pyrroline-5-carboxylate. This is Gamma-glutamyl phosphate reductase from Rhodopseudomonas palustris (strain TIE-1).